A 1013-amino-acid polypeptide reads, in one-letter code: Tolloid-like protein 1 (1013 aa).

Positions 1 to 30 (MGLQALSPRMLLWLVVSGIVFSRVLWVCAG) are cleaved as a signal peptide. The propeptide occupies 31–147 (LDYDYTFDGN…EQSEKNRVPR (117 aa)). The interval 124–150 (QNNTMKGKAPPKLSEQSEKNRVPRAAT) is disordered. Residues 148–347 (AATSRTERIW…AQARKLYRCP (200 aa)) enclose the Peptidase M12A domain. N-linked (GlcNAc...) asparagine glycosylation is present at asparagine 169. 4 disulfides stabilise this stretch: cysteine 190–cysteine 346, cysteine 210–cysteine 232, cysteine 212–cysteine 213, and cysteine 349–cysteine 375. Histidine 240 provides a ligand contact to Zn(2+). The active site involves glutamate 241. Zn(2+)-binding residues include histidine 244 and histidine 250. CUB domains lie at 349 to 461 (CGET…YEAI) and 462 to 574 (CGGE…FFKE). N-linked (GlcNAc...) asparagine glycans are attached at residues asparagine 359 and asparagine 390. 15 disulfides stabilise this stretch: cysteine 402–cysteine 424, cysteine 462–cysteine 488, cysteine 515–cysteine 537, cysteine 578–cysteine 590, cysteine 586–cysteine 599, cysteine 601–cysteine 614, cysteine 618–cysteine 644, cysteine 671–cysteine 693, cysteine 734–cysteine 745, cysteine 741–cysteine 754, cysteine 756–cysteine 769, cysteine 774–cysteine 800, cysteine 827–cysteine 849, cysteine 887–cysteine 917, and cysteine 944–cysteine 966. The region spanning 574–615 (EEDECAKPDRGGCEQRCLNTLGSYQCACEPGYELGPDRRSCE) is the EGF-like 1; calcium-binding domain. The 113-residue stretch at 618 to 730 (CGGLLTKLNG…KGFKAHFFSD (113 aa)) folds into the CUB 3 domain. An N-linked (GlcNAc...) asparagine glycan is attached at asparagine 626. The EGF-like 2; calcium-binding domain maps to 730 to 770 (DKDECSKDNGGCQHECVNTMGSYTCQCRNGFVLHENKHDCK). CUB domains lie at 774-886 (CEQK…HSTE) and 887-1003 (CGGR…YKSI).

Zn(2+) is required as a cofactor. As to expression, highly expressed in brain and kidney and weakly in lung, skeletal muscle. A perceptible level of expression is observed in heart and testis.

Its subcellular location is the secreted. Protease which processes procollagen C-propeptides, such as chordin, pro-biglycan and pro-lysyl oxidase. Required for the embryonic development, especially heart development. Predominant protease, which in the development, influences dorsal-ventral patterning and skeletogenesis. This chain is Tolloid-like protein 1 (Tll1), found in Mus musculus (Mouse).